Here is an 89-residue protein sequence, read N- to C-terminus: MALTAEQKKEILGQYGLHDTDTGSPEAQVALLTKRIVDLTEHLKQHKHDHHSRRGLLLLVGRRRRLLKYVAQVDVERYRSLIERLGLRR.

Belongs to the universal ribosomal protein uS15 family. Part of the 30S ribosomal subunit. Forms a bridge to the 50S subunit in the 70S ribosome, contacting the 23S rRNA.

Functionally, one of the primary rRNA binding proteins, it binds directly to 16S rRNA where it helps nucleate assembly of the platform of the 30S subunit by binding and bridging several RNA helices of the 16S rRNA. In terms of biological role, forms an intersubunit bridge (bridge B4) with the 23S rRNA of the 50S subunit in the ribosome. This chain is Small ribosomal subunit protein uS15, found in Mycolicibacterium vanbaalenii (strain DSM 7251 / JCM 13017 / BCRC 16820 / KCTC 9966 / NRRL B-24157 / PYR-1) (Mycobacterium vanbaalenii).